Reading from the N-terminus, the 478-residue chain is MSPQTETKASVGFKAGVKDYKLTYYTPEYETKDTDILAAFRVTPQPGVPPEEAGAAVAAESSTGTWTTVWTDGLTSLDRYKGRCYHIEPVPGEEDQYICYVAYPLDLFEEGSVTNMFTSIVGNVFGFKALRALRLEDLRIPPTYSKTFQGPPHGIQVERDKLNKYGRPLLGCTIKPKLGLSAKNYGRACYECLRGGLDFTKDDENVNSQPFMRWRDRFVFCAEAIYKAQAETGEIKGHYLNATAGTCEEMMKRAAFARELGVPIVMHDYLTGGFTANTSLSMYCRDNGLLLHIHRAMHAVIDRQKNHGIHFRVLAKALRMSGGDHVHSGTVVGKLEGEREITLGFVDLLRDDFIEKDRSRGVFFTQDWVSMPGVIPVASGGIHVWHMPALTEIFGDDSVLQFGGGTLGHPWGNAPGAVANRVALEACVQARNEGRDLAREGNEIIKAACKWSPELAAACEVWKAIKFEFEPVDTVDKV.

Residues 1–2 (MS) constitute a propeptide that is removed on maturation. P3 is modified (N-acetylproline). N6,N6,N6-trimethyllysine is present on K14. Substrate is bound by residues N123 and T173. The active-site Proton acceptor is the K175. K177 contributes to the substrate binding site. K201, D203, and E204 together coordinate Mg(2+). At K201 the chain carries N6-carboxylysine. H294 acts as the Proton acceptor in catalysis. The substrate site is built by R295, H327, and S379.

It belongs to the RuBisCO large chain family. Type I subfamily. Heterohexadecamer of 8 large chains and 8 small chains; disulfide-linked. The disulfide link is formed within the large subunit homodimers. The cofactor is Mg(2+). Post-translationally, the disulfide bond which can form in the large chain dimeric partners within the hexadecamer appears to be associated with oxidative stress and protein turnover.

The protein resides in the plastid. Its subcellular location is the chloroplast. The enzyme catalyses 2 (2R)-3-phosphoglycerate + 2 H(+) = D-ribulose 1,5-bisphosphate + CO2 + H2O. It carries out the reaction D-ribulose 1,5-bisphosphate + O2 = 2-phosphoglycolate + (2R)-3-phosphoglycerate + 2 H(+). Functionally, ruBisCO catalyzes two reactions: the carboxylation of D-ribulose 1,5-bisphosphate, the primary event in carbon dioxide fixation, as well as the oxidative fragmentation of the pentose substrate in the photorespiration process. Both reactions occur simultaneously and in competition at the same active site. This chain is Ribulose bisphosphate carboxylase large chain, found in Neurachne munroi.